The chain runs to 121 residues: Trypsin/alpha-amylase inhibitor CMX2 (121 aa).

A signal peptide spans 1–24 (MAFKHQLILSTAILLAVLAAASAS).

The protein belongs to the protease inhibitor I6 (cereal trypsin/alpha-amylase inhibitor) family.

It is found in the secreted. This Triticum aestivum (Wheat) protein is Trypsin/alpha-amylase inhibitor CMX2.